The following is a 410-amino-acid chain: Gamma-glutamyl phosphate reductase (410 aa).

The protein belongs to the gamma-glutamyl phosphate reductase family.

It localises to the cytoplasm. The catalysed reaction is L-glutamate 5-semialdehyde + phosphate + NADP(+) = L-glutamyl 5-phosphate + NADPH + H(+). The protein operates within amino-acid biosynthesis; L-proline biosynthesis; L-glutamate 5-semialdehyde from L-glutamate: step 2/2. Catalyzes the NADPH-dependent reduction of L-glutamate 5-phosphate into L-glutamate 5-semialdehyde and phosphate. The product spontaneously undergoes cyclization to form 1-pyrroline-5-carboxylate. The chain is Gamma-glutamyl phosphate reductase from Sulfurimonas denitrificans (strain ATCC 33889 / DSM 1251) (Thiomicrospira denitrificans (strain ATCC 33889 / DSM 1251)).